Reading from the N-terminus, the 304-residue chain is Acetaldehyde dehydrogenase 1 (304 aa).

C131 acts as the Acyl-thioester intermediate in catalysis. NAD(+) contacts are provided by residues 162 to 170 (SAGPGTRKN) and N273.

Belongs to the acetaldehyde dehydrogenase family.

It catalyses the reaction acetaldehyde + NAD(+) + CoA = acetyl-CoA + NADH + H(+). The chain is Acetaldehyde dehydrogenase 1 from Dechloromonas aromatica (strain RCB).